The sequence spans 265 residues: MDEVSRSHTPQFLSSDHQHYHHQNAGRQKRGREEEGVEPNNIGEDLATFPSGEENIKKRRPRGRPAGSKNKPKAPIIVTRDSANAFRCHVMEITNACDVMESLAVFARRRQRGVCVLTGNGAVTNVTVRQPGGGVVSLHGRFEILSLSGSFLPPPAPPAASGLKVYLAGGQGQVIGGSVVGPLTASSPVVVMAASFGNASYERLPLEEEEETEREIDGNAARAIGTQTQKQLMQDATSFIGSPSNLINSVSLPGEAYWGTQRPSF.

A disordered region spans residues 1–75 (MDEVSRSHTP…AGSKNKPKAP (75 aa)). Basic residues predominate over residues 19–30 (HYHHQNAGRQKR). The segment at residues 59–71 (RRPRGRPAGSKNK) is a DNA-binding region (a.T hook). Residues 83-217 (ANAFRCHVME…EEEETEREID (135 aa)) form the PPC domain.

It is found in the nucleus. Functionally, transcription factor that specifically binds AT-rich DNA sequences related to the nuclear matrix attachment regions (MARs). Acts redundantly with AHL22, AHL27 and AHL29 in the regulation of flowering and regulation of the hypocotyl elongation. This chain is AT-hook motif nuclear-localized protein 18, found in Arabidopsis thaliana (Mouse-ear cress).